Reading from the N-terminus, the 1241-residue chain is ATP-dependent helicase/nuclease subunit A (1241 aa).

A UvrD-like helicase ATP-binding domain is found at 12 to 485 (SQWTDDQWKA…IDLAKNFRSR (474 aa)). Position 33-40 (33-40 (AAAGSGKT)) interacts with ATP. The UvrD-like helicase C-terminal domain maps to 505-805 (GEIDYDADAE…RIMTIHKSKG (301 aa)).

It belongs to the helicase family. AddA subfamily. Heterodimer of AddA and AddB/RexB. The cofactor is Mg(2+).

The enzyme catalyses Couples ATP hydrolysis with the unwinding of duplex DNA by translocating in the 3'-5' direction.. It carries out the reaction ATP + H2O = ADP + phosphate + H(+). The heterodimer acts as both an ATP-dependent DNA helicase and an ATP-dependent, dual-direction single-stranded exonuclease. Recognizes the chi site generating a DNA molecule suitable for the initiation of homologous recombination. The AddA nuclease domain is required for chi fragment generation; this subunit has the helicase and 3' -&gt; 5' nuclease activities. The protein is ATP-dependent helicase/nuclease subunit A of Bacillus mycoides (strain KBAB4) (Bacillus weihenstephanensis).